Reading from the N-terminus, the 363-residue chain is DNA primase small subunit PriS (363 aa).

Catalysis depends on residues Asp105, Asp107, and Asp265.

It belongs to the eukaryotic-type primase small subunit family. As to quaternary structure, heterodimer of a small subunit (PriS) and a large subunit (PriL). Mg(2+) is required as a cofactor. Mn(2+) serves as cofactor.

Functionally, catalytic subunit of DNA primase, an RNA polymerase that catalyzes the synthesis of short RNA molecules used as primers for DNA polymerase during DNA replication. The small subunit contains the primase catalytic core and has DNA synthesis activity on its own. Binding to the large subunit stabilizes and modulates the activity, increasing the rate of DNA synthesis while decreasing the length of the DNA fragments, and conferring RNA synthesis capability. The DNA polymerase activity may enable DNA primase to also catalyze primer extension after primer synthesis. May also play a role in DNA repair. The sequence is that of DNA primase small subunit PriS from Methanococcus maripaludis (strain C7 / ATCC BAA-1331).